A 164-amino-acid polypeptide reads, in one-letter code: 6,7-dimethyl-8-ribityllumazine synthase (164 aa).

Residues Phe24, 58 to 60, and 82 to 84 each bind 5-amino-6-(D-ribitylamino)uracil; these read ALE and AVI. 87 to 88 provides a ligand contact to (2S)-2-hydroxy-3-oxobutyl phosphate; it reads ET. The Proton donor role is filled by His90. Residue Asn115 coordinates 5-amino-6-(D-ribitylamino)uracil. Arg129 is a binding site for (2S)-2-hydroxy-3-oxobutyl phosphate.

The protein belongs to the DMRL synthase family.

It carries out the reaction (2S)-2-hydroxy-3-oxobutyl phosphate + 5-amino-6-(D-ribitylamino)uracil = 6,7-dimethyl-8-(1-D-ribityl)lumazine + phosphate + 2 H2O + H(+). The protein operates within cofactor biosynthesis; riboflavin biosynthesis; riboflavin from 2-hydroxy-3-oxobutyl phosphate and 5-amino-6-(D-ribitylamino)uracil: step 1/2. In terms of biological role, catalyzes the formation of 6,7-dimethyl-8-ribityllumazine by condensation of 5-amino-6-(D-ribitylamino)uracil with 3,4-dihydroxy-2-butanone 4-phosphate. This is the penultimate step in the biosynthesis of riboflavin. This Ralstonia nicotianae (strain ATCC BAA-1114 / GMI1000) (Ralstonia solanacearum) protein is 6,7-dimethyl-8-ribityllumazine synthase.